Here is a 372-residue protein sequence, read N- to C-terminus: D-alanine--D-alanine ligase (372 aa).

The region spanning Lys-145–Glu-349 is the ATP-grasp domain. Position 176–231 (Asp-176–Glu-231) interacts with ATP. Asp-303, Glu-316, and Asn-318 together coordinate Mg(2+).

It belongs to the D-alanine--D-alanine ligase family. It depends on Mg(2+) as a cofactor. Requires Mn(2+) as cofactor.

It is found in the cytoplasm. The enzyme catalyses 2 D-alanine + ATP = D-alanyl-D-alanine + ADP + phosphate + H(+). It functions in the pathway cell wall biogenesis; peptidoglycan biosynthesis. In terms of biological role, cell wall formation. This chain is D-alanine--D-alanine ligase, found in Coxiella burnetii (strain Dugway 5J108-111).